We begin with the raw amino-acid sequence, 294 residues long: NAD kinase (294 aa).

Asp74 acts as the Proton acceptor in catalysis. NAD(+) is bound by residues 74–75 (DG), 148–149 (NE), His159, Arg176, Asp178, 189–194 (TAYSLS), and Gln249.

The protein belongs to the NAD kinase family. The cofactor is a divalent metal cation.

It is found in the cytoplasm. It catalyses the reaction NAD(+) + ATP = ADP + NADP(+) + H(+). Its function is as follows. Involved in the regulation of the intracellular balance of NAD and NADP, and is a key enzyme in the biosynthesis of NADP. Catalyzes specifically the phosphorylation on 2'-hydroxyl of the adenosine moiety of NAD to yield NADP. In Vibrio vulnificus (strain YJ016), this protein is NAD kinase.